A 660-amino-acid chain; its full sequence is Bifunctional polymyxin resistance protein ArnA (660 aa).

The formyltransferase ArnAFT stretch occupies residues 1-304; it reads MKAVIFAYHD…TLGLVAGARL (304 aa). The Proton donor; for formyltransferase activity role is filled by His-104. (6R)-10-formyltetrahydrofolate is bound by residues Arg-114 and 136–140; that span reads VKRAD. Positions 314-660 are dehydrogenase ArnADH; that stretch reads RRIRVLILGV…RSVDVAERAS (347 aa). NAD(+)-binding positions include Asp-347 and 368-369; that span reads DI. UDP-alpha-D-glucuronate is bound by residues Ala-393, Tyr-398, and 432 to 433; that span reads TS. The active-site Proton acceptor; for decarboxylase activity is the Glu-434. UDP-alpha-D-glucuronate-binding positions include Arg-460, Asn-492, 526–535, and Tyr-613; that span reads KLIDGGQQKR. Arg-619 (proton donor; for decarboxylase activity) is an active-site residue.

This sequence in the N-terminal section; belongs to the Fmt family. UDP-L-Ara4N formyltransferase subfamily. The protein in the C-terminal section; belongs to the NAD(P)-dependent epimerase/dehydratase family. UDP-glucuronic acid decarboxylase subfamily. As to quaternary structure, homohexamer, formed by a dimer of trimers.

The catalysed reaction is UDP-alpha-D-glucuronate + NAD(+) = UDP-beta-L-threo-pentopyranos-4-ulose + CO2 + NADH. It carries out the reaction UDP-4-amino-4-deoxy-beta-L-arabinose + (6R)-10-formyltetrahydrofolate = UDP-4-deoxy-4-formamido-beta-L-arabinose + (6S)-5,6,7,8-tetrahydrofolate + H(+). The protein operates within nucleotide-sugar biosynthesis; UDP-4-deoxy-4-formamido-beta-L-arabinose biosynthesis; UDP-4-deoxy-4-formamido-beta-L-arabinose from UDP-alpha-D-glucuronate: step 1/3. It functions in the pathway nucleotide-sugar biosynthesis; UDP-4-deoxy-4-formamido-beta-L-arabinose biosynthesis; UDP-4-deoxy-4-formamido-beta-L-arabinose from UDP-alpha-D-glucuronate: step 3/3. Its pathway is bacterial outer membrane biogenesis; lipopolysaccharide biosynthesis. Bifunctional enzyme that catalyzes the oxidative decarboxylation of UDP-glucuronic acid (UDP-GlcUA) to UDP-4-keto-arabinose (UDP-Ara4O) and the addition of a formyl group to UDP-4-amino-4-deoxy-L-arabinose (UDP-L-Ara4N) to form UDP-L-4-formamido-arabinose (UDP-L-Ara4FN). The modified arabinose is attached to lipid A and is required for resistance to polymyxin and cationic antimicrobial peptides. The chain is Bifunctional polymyxin resistance protein ArnA from Salmonella enteritidis PT4 (strain P125109).